The following is a 403-amino-acid chain: Accessory Sec system protein translocase subunit SecY2 (403 aa).

The next 10 helical transmembrane spans lie at 17 to 37 (MLYTCFILFIYILGTNISIVS), 63 to 83 (LNIFTLGLVPWLTSMIILMLI), 105 to 125 (ILTLILSVIQSYFVIHEYVSK), 131 to 151 (DNIYLTILILVTGTMLLVWLA), 157 to 177 (YGIAGPMPIVMVSIIKSMMHQ), 186 to 206 (HIVIALLIILVIITLFILLFI), 240 to 260 (ITLMMSISAFVFLKSGIHFIL), 276 to 296 (FDSPVGISVYLVIQMLLGYFL), 339 to 359 (WFGSALVTVIIGIPLYFTLFV), and 366 to 386 (IYFSVQLIVLVYISINIAETI).

Belongs to the SecY/SEC61-alpha family. SecY2 subfamily. Component of the accessory SecA2/SecY2 protein translocase complex required to export cell wall proteins. May form heterotrimers with SecE and SecG subunits.

Its subcellular location is the cell membrane. In terms of biological role, part of the accessory SecA2/SecY2 system specifically required for export of possible cell wall proteins. The central subunit of a protein translocation channel. The polypeptide is Accessory Sec system protein translocase subunit SecY2 (Staphylococcus aureus (strain N315)).